A 369-amino-acid polypeptide reads, in one-letter code: Caffeine synthase 1 (369 aa).

Tyr24 is a binding site for S-adenosyl-L-homocysteine. Thr31 serves as a coordination point for caffeine. Residues Cys66, Asn71, Asp103, Leu104, Ser138, and Phe139 each contribute to the S-adenosyl-L-homocysteine site. Caffeine-binding residues include Tyr156, His159, and Trp160. A Mg(2+)-binding site is contributed by Asn177. Residue Arg225 participates in caffeine binding. Mg(2+) is bound by residues Asp263, Phe265, and Asn266. Residue Phe321 coordinates caffeine.

This sequence belongs to the methyltransferase superfamily. Type-7 methyltransferase family. It depends on Mg(2+) as a cofactor.

It catalyses the reaction theobromine + S-adenosyl-L-methionine = caffeine + S-adenosyl-L-homocysteine + H(+). The catalysed reaction is 7-methylxanthine + S-adenosyl-L-methionine = theobromine + S-adenosyl-L-homocysteine + H(+). The protein operates within alkaloid biosynthesis. In terms of biological role, involved in the biosynthesis of caffeine. Catalyzes the conversion of 7-methylxanthine (7mX) to theobromine and of theobromine to caffeine. The chain is Caffeine synthase 1 from Camellia crassicolumna (Evergreen tea).